The following is an 892-amino-acid chain: Chromodomain-helicase-DNA-binding protein 3 (892 aa).

Over residues 1 to 20 the composition is skewed to basic and acidic residues; the sequence is MSSKRGADPDWKTPGKASKD. The interval 1–29 is disordered; it reads MSSKRGADPDWKTPGKASKDKRPKTNAKK. A PHD-type zinc finger spans residues 35–82; sequence EEYCKVCSDGGDLLCCDSCPSVYHRTCLSPPLKSIPKGDWICPRCIPL. Chromo domains lie at 84 to 156 and 179 to 240; these read GKAE…PSLE and LLVQ…GRQR. Positions 279 to 458 constitute a Helicase ATP-binding domain; sequence RYSWGQGIPT…FHLLNFLSSG (180 aa). 292 to 299 is an ATP binding site; that stretch reads DEMGLGKT. The short motif at 409–412 is the DEAH box element; it reads DEAH. Positions 590–739 constitute a Helicase C-terminal domain; the sequence is LLSKMLKQLK…LTHLVVRPGM (150 aa). Positions 839–892 are disordered; it reads SQPKLPKKQKKQSQQSQVDVESIMGKGKRIRKEIDYSNQYPSPNRATPSSIVLM. Polar residues predominate over residues 874–892; sequence YSNQYPSPNRATPSSIVLM.

This sequence belongs to the SNF2/RAD54 helicase family. In terms of assembly, monomer.

The protein resides in the nucleus. It is found in the chromosome. It catalyses the reaction ATP + H2O = ADP + phosphate + H(+). Its activity is regulated as follows. ATPase activity is stimulated by binding to DNA or nucleosomes, but is strongly activated by nucleosomes. In terms of biological role, ATP-dependent chromatin-remodeling factor which acts in nucleosome-remodeling by catalyzing ATP-dependent nucleosome mobilization. Likely to be involved in the regulation of transcription. The chain is Chromodomain-helicase-DNA-binding protein 3 from Drosophila melanogaster (Fruit fly).